The chain runs to 631 residues: Peptidyl-prolyl cis-trans isomerase CYP71 (631 aa).

The tract at residues 26-45 (VEEEEPMVGPGPAPRGKRKR) is disordered. WD repeat units follow at residues 68-106 (MHRDVVTHVAVSAAEFFISGSMDGHLKFWKKKGVGIEFA), 111-150 (SHLGPIEGLAVSIDGLLCCTISNDHAVKIYDVVNYDMMAM), 201-240 (IHMNPIKVMKYNPVSDTMISGDTKGIIEYWSATTLQFPED), and 257-297 (KCKT…RRVY). The PPIase cyclophilin-type domain occupies 474–628 (LPENVIMHTT…QDVKILNVTV (155 aa)).

It belongs to the cyclophilin-type PPIase family. As to quaternary structure, interacts with FAS1 and LHP1. Interacts (via WD repeat domain) with histone H3. As to expression, ubiquitous. Expressed in the meristems.

The protein localises to the nucleus. It carries out the reaction [protein]-peptidylproline (omega=180) = [protein]-peptidylproline (omega=0). PPIases accelerate the folding of proteins. It catalyzes the cis-trans isomerization of proline imidic peptide bonds in oligopeptides. Histone proline isomerase that increases the rate of cis-trans isomerization of the synthetic histone H3 peptides H3P30 (RKSAP30F-p-nitroanilide) and H3P30K27me3 (RKme3-SAP30F-p-nitroanilide) in the histone H3 N-terminal tail, in vitro. Histone remodeling factor involved in chromatin-based gene silencing. Reinforces H3K27 methylation. Involved in fundamental processes of chromatin assembly and histone modification by mediating the targeting of FAS1 and LHP1 on the chromatin. Required for the formation and development of leaves, for normal phyllotaxy and for the formation, maintenance and activity of root and shoot apical meristems. The polypeptide is Peptidyl-prolyl cis-trans isomerase CYP71 (Arabidopsis thaliana (Mouse-ear cress)).